Reading from the N-terminus, the 464-residue chain is F-box/WD repeat-containing protein 12 (464 aa).

Positions 1–45 (MEIRLPDLALKRIFSFLDLFGLLQVSQVNKHWNRIADSDYLWRSL) constitute an F-box domain. WD repeat units lie at residues 89 to 132 (YKVT…CAWD), 136 to 174 (GTMI…KVWN), 178 to 217 (RDAL…YTFT), 222 to 263 (RDVS…FLTE), 270 to 315 (EGSV…ITFD), 320 to 367 (KTGG…LLFS), 370 to 407 (GFLL…YMWE), and 416 to 461 (RSCC…VMYS).

Interacts with SKP1. Interacts with CUL1. Interacts with IL22RA1. Ubiquitously expressed.

The protein operates within protein modification; protein ubiquitination. Substrate-recognition component of the SCF (SKP1-CUL1-F-box protein)-type E3 ubiquitin ligase complex. Promotes degradation of interleukin-22 receptor subunit IL22RA1 in resting and IL22-stimulated conditions by facilitating its ubiquitination. Functions as a cell growth suppressor. The protein is F-box/WD repeat-containing protein 12 (FBXW12) of Homo sapiens (Human).